Consider the following 207-residue polypeptide: Pyridoxal 5'-phosphate synthase subunit PdxT (207 aa).

An L-glutamine-binding site is contributed by glycine 51–serine 53. Catalysis depends on cysteine 83, which acts as the Nucleophile. Residues arginine 112 and isoleucine 143–arginine 144 each bind L-glutamine. Active-site charge relay system residues include histidine 184 and glutamate 186.

It belongs to the glutaminase PdxT/SNO family. As to quaternary structure, in the presence of PdxS, forms a dodecamer of heterodimers. Only shows activity in the heterodimer.

It catalyses the reaction aldehydo-D-ribose 5-phosphate + D-glyceraldehyde 3-phosphate + L-glutamine = pyridoxal 5'-phosphate + L-glutamate + phosphate + 3 H2O + H(+). The enzyme catalyses L-glutamine + H2O = L-glutamate + NH4(+). The protein operates within cofactor biosynthesis; pyridoxal 5'-phosphate biosynthesis. Its function is as follows. Catalyzes the hydrolysis of glutamine to glutamate and ammonia as part of the biosynthesis of pyridoxal 5'-phosphate. The resulting ammonia molecule is channeled to the active site of PdxS. The sequence is that of Pyridoxal 5'-phosphate synthase subunit PdxT from Kineococcus radiotolerans (strain ATCC BAA-149 / DSM 14245 / SRS30216).